The following is a 620-amino-acid chain: uncharacterized protein (620 aa).

2 stretches are compositionally biased toward low complexity: residues 278–290 and 301–319; these read RPPSGSGEAAGEP and ASTASATAATSTRGPTRPT. The segment at 278-620 is disordered; sequence RPPSGSGEAA…KSQPPAAHTA (343 aa). Residues 336–411 are compositionally biased toward basic and acidic residues; the sequence is ARPESEEQTD…QESQVARRDE (76 aa). Pro residues-rich tracts occupy residues 446–470 and 481–500; these read VPGPDPRLWVPPPHLLFPSPLPPMT and RCPPGPAEEPPTCRPRPPRP. Composition is skewed to low complexity over residues 501 to 512 and 522 to 541; these read SSDTPLSAVSRP and TARVRFFLSSSSSSPSYSPA. The segment covering 542–551 has biased composition (pro residues); sequence PLSPPSPVSP. Low complexity predominate over residues 597–607; it reads SVPSSASPSAS.

It belongs to the herpesviridae US22 family.

This is an uncharacterized protein from Homo sapiens (Human).